We begin with the raw amino-acid sequence, 85 residues long: MNVSRKELRVLNVLAQGGRILKHKDENGRLTHVACVTPEGWQLSLCTLEVFQQLKRRKLISSVKGGPYLITRLGLQALCGSSKTR.

Belongs to the UPF0386 family.

This chain is UPF0386 protein MXAN_1729, found in Myxococcus xanthus (strain DK1622).